The chain runs to 939 residues: Dynamin-like GTPase MGM1, mitochondrial (939 aa).

The transit peptide at Met1–Arg27 directs the protein to the mitochondrion. The helical transmembrane segment at Phe85–Val103 threads the bilayer. A compositionally biased stretch (gly residues) spans Ala170–Gly183. The disordered stretch occupies residues Ala170 to Ala196. Residues Thr249–Asn522 form the Dynamin-type G domain. The tract at residues Gly259–Ser266 is G1 motif. GTP contacts are provided by Ser262, Gly264, Lys265, Ser266, Ser267, and Gly281. Mg(2+) is bound at residue Ser266. The G2 motif stretch occupies residues Ile285–Arg287. Mg(2+)-binding residues include Thr286 and Asp359. The tract at residues Asp359–Gly362 is G3 motif. Residues Thr427–Asp430 are G4 motif. Residues Lys428, Asp430, and Ser457 each coordinate GTP. Residues Ile456–Leu459 are G5 motif. Residues Ser549 to Lys703 form a stalk region region. The tract at residues Asp710–Ser809 is paddle region. Positions Arg810–Glu877 are stalk region. An intrachain disulfide couples Cys812 to Cys821. The GED domain maps to Leu815–Ser909.

Belongs to the TRAFAC class dynamin-like GTPase superfamily. Dynamin/Fzo/YdjA family. As to quaternary structure, oligomeric complex consisting of membrane-bound and soluble forms of MGM1. Cleavage of the transit peptide by mitochondrial processing protease (MPP) produces a long integral membrane form of MGM1 (L-MGM1). Further processing by the rhomboid protease PCP1 produces a short peripheral membrane form of MGM1 (S-MGM1). Both forms are required for full activity.

It localises to the mitochondrion inner membrane. Its subcellular location is the mitochondrion intermembrane space. The enzyme catalyses GTP + H2O = GDP + phosphate + H(+). Its function is as follows. Dynamin-related GTPase that is essential for normal mitochondrial morphology by mediating fusion of the mitochondrial inner membranes, regulating cristae morphology and maintaining respiratory chain function. Exists in two forms: the transmembrane, long form (Dynamin-like GTPase MGM1, long form; L-MGM1), which is tethered to the inner mitochondrial membrane, and the short soluble form (Dynamin-like GTPase MGM1, short form; S-MGM1), which results from proteolytic cleavage and localizes in the intermembrane space. Both forms (L-MGM1 and S-MGM1) cooperate to catalyze the fusion of the mitochondrial inner membrane. The equilibrium between L-MGM1 and S-MGM1 is essential: excess levels of S-MGM1, following loss of mitochondrial membrane potential, lead to an impaired equilibrium between L-MGM1 and S-MGM1, inhibiting mitochondrial fusion. Plays a role in the maintenance and remodeling of mitochondrial cristae, some invaginations of the mitochondrial inner membrane that provide an increase in the surface area. Probably acts by forming helical filaments at the inside of inner membrane tubes with the shape and dimensions of crista junctions. Constitutes the transmembrane long form (L-MGM1) that plays a central role in mitochondrial inner membrane fusion and cristae morphology. L-MGM1 and the soluble short form (S-MGM1) form higher-order helical assemblies that coordinate the fusion of mitochondrial inner membranes. Inner membrane-anchored L-MGM1 molecules initiate membrane remodeling by recruiting soluble S-MGM1 to rapidly polymerize into a flexible cylindrical scaffold encaging the mitochondrial inner membrane. Once at the membrane surface, the formation of S-MGM1 helices induce bilayer curvature. MGM1 dimerization through the paddle region, which inserts into cardiolipin-containing membrane, promotes GTP hydrolysis and the helical assembly of a flexible MGM1 lattice on the membrane, which drives membrane curvature and mitochondrial fusion. Functionally, constitutes the soluble short form (S-MGM1) generated by cleavage by PCP1, which plays a central role in mitochondrial inner membrane fusion and cristae morphology. The transmembrane long form (L-MGM1) and the S-MGM1 form higher-order helical assemblies that coordinate the fusion of mitochondrial inner membranes. Inner membrane-anchored L-MGM1 molecules initiate membrane remodeling by recruiting soluble S-MGM1 to rapidly polymerize into a flexible cylindrical scaffold encaging the mitochondrial inner membrane. Once at the membrane surface, the formation of S-MGM1 helices induce bilayer curvature. MGM1 dimerization through the paddle region, which inserts into cardiolipin-containing membrane, promotes GTP hydrolysis and the helical assembly of a flexible MGM1 lattice on the membrane, which drives membrane curvature and mitochondrial fusion. Excess levels of S-MGM1 produced by cleavage by PCP1 following stress conditions that induce loss of mitochondrial membrane potential, lead to an impaired equilibrium between L-MGM1 and S-MGM1, thereby inhibiting mitochondrial fusion. This Chaetomium thermophilum (strain DSM 1495 / CBS 144.50 / IMI 039719) (Thermochaetoides thermophila) protein is Dynamin-like GTPase MGM1, mitochondrial.